Reading from the N-terminus, the 240-residue chain is Glutathione S-transferase U9 (240 aa).

The region spanning 7–86 (NKVILHGSFA…YIDETWSNGP (80 aa)) is the GST N-terminal domain. Residues 17 to 18 (SP), 43 to 44 (NK), 57 to 58 (KI), and 70 to 71 (ES) contribute to the glutathione site. The region spanning 92–226 (DPYRRSKVRF…EQILEILRAF (135 aa)) is the GST C-terminal domain. Thr-161 carries the post-translational modification Phosphothreonine.

This sequence belongs to the GST superfamily. Tau family.

The protein resides in the cytoplasm. Its subcellular location is the cytosol. It catalyses the reaction RX + glutathione = an S-substituted glutathione + a halide anion + H(+). Its function is as follows. May be involved in the conjugation of reduced glutathione to a wide number of exogenous and endogenous hydrophobic electrophiles and have a detoxification role against certain herbicides. The protein is Glutathione S-transferase U9 (GSTU9) of Arabidopsis thaliana (Mouse-ear cress).